The chain runs to 264 residues: Spermidine/putrescine transport system permease protein PotC (264 aa).

Residues 1-7 lie on the Cytoplasmic side of the membrane; it reads MIGRLLR. Residues 8-27 traverse the membrane as a helical segment; that stretch reads GGFMTAIYAYLYIPIIILIV. Topologically, residues 28-65 are periplasmic; the sequence is NSFNSSRFGINWQGFTTKWYSLLMNNDSLLQAAQHSLT. The ABC transmembrane type-1 domain maps to 60–248; sequence AQHSLTMAVF…VLSLVMVIAS (189 aa). Residues 66-85 form a helical membrane-spanning segment; the sequence is MAVFSATFATLIGSLTAVAL. The Cytoplasmic portion of the chain corresponds to 86 to 100; the sequence is YRYRFRGKPFVSGML. A helical transmembrane segment spans residues 101 to 120; it reads FVVMMSPDIVMAISLLVLFM. Residues 121 to 128 are Periplasmic-facing; the sequence is LLGIQLGF. Residues 129 to 148 form a helical membrane-spanning segment; sequence WSLLFSHITFCLPFVVVTVY. The Cytoplasmic portion of the chain corresponds to 149 to 176; the sequence is SRLKGFDVRMLEAAKDLGASEFTILRKI. A helical membrane pass occupies residues 177-196; the sequence is ILPLAMPAVAAGWVLSFTLS. The Periplasmic portion of the chain corresponds to 197 to 231; sequence MDDVVVSSFVTGPSYEILPLKIYSMVKVGVSPEVN. Residues 232-251 form a helical membrane-spanning segment; that stretch reads ALATILLVLSLVMVIASQLI. At 252–264 the chain is on the cytoplasmic side; that stretch reads ARDKTKGNTGDVK.

Belongs to the binding-protein-dependent transport system permease family. CysTW subfamily.

It localises to the cell inner membrane. In terms of biological role, required for the activity of the bacterial periplasmic transport system of putrescine and spermidine. The polypeptide is Spermidine/putrescine transport system permease protein PotC (potC) (Escherichia coli O157:H7).